Reading from the N-terminus, the 102-residue chain is Putative pterin-4-alpha-carbinolamine dehydratase (102 aa).

Belongs to the pterin-4-alpha-carbinolamine dehydratase family.

The catalysed reaction is (4aS,6R)-4a-hydroxy-L-erythro-5,6,7,8-tetrahydrobiopterin = (6R)-L-erythro-6,7-dihydrobiopterin + H2O. The chain is Putative pterin-4-alpha-carbinolamine dehydratase from Psychromonas ingrahamii (strain DSM 17664 / CCUG 51855 / 37).